Reading from the N-terminus, the 219-residue chain is Probable N-acetyltransferase camello (219 aa).

Helical transmembrane passes span 42-62 (FYFI…SYVL) and 64-84 (LTSL…EFHG). An N-acetyltransferase domain is found at 62–218 (LSLTSLVALL…TVIYYRYDIK (157 aa)).

It belongs to the camello family. In terms of tissue distribution, at the beginning of gastrulation, expressed in deep cells of the presumptive mesoderm. At later gastrulation stages, expressed at the interface between already involuted and preinvoluted mesoderm. At late neurula and tailbud stages, expressed in the deep mass of cells lying ventrally and laterally to the closed blastopore.

The protein resides in the golgi apparatus membrane. Functionally, plays a role in regulation of gastrulation, possibly by controlled reduction of cell adhesion which is necessary for optimal cell motility. The polypeptide is Probable N-acetyltransferase camello (Xenopus laevis (African clawed frog)).